Reading from the N-terminus, the 331-residue chain is MATYKDAGVNIEEGYKSVNLMKEHVQKTFNKGVLNGIGSFAAMYELGKYKNPVLVSGTDGVGTKLKIAFELEKYNTIGIDCVAMCVNDILCHGAKPLFFLDYMACGKLKGEVAADIVKGVSDGCLRAGCALIGGETAEMPGFYKEGEYDIAGFAVGIVEKENIVDGQDIKEGDVLIGIASSGVHSNGYSLVRSVIKDFREEFHGKIIGEELLTPTKIYVKPVLQLLKSYPIKGMAHITGGGFYENIPRMFKDDLNVVISKNSFPRPDIFEYIISKGIEENHMFNVFNMGIGFVLCVDPCYEKKIIEKLIEQGEKAYKIGHIEKGERKVIIK.

Belongs to the AIR synthase family.

It is found in the cytoplasm. It carries out the reaction 2-formamido-N(1)-(5-O-phospho-beta-D-ribosyl)acetamidine + ATP = 5-amino-1-(5-phospho-beta-D-ribosyl)imidazole + ADP + phosphate + H(+). It functions in the pathway purine metabolism; IMP biosynthesis via de novo pathway; 5-amino-1-(5-phospho-D-ribosyl)imidazole from N(2)-formyl-N(1)-(5-phospho-D-ribosyl)glycinamide: step 2/2. The polypeptide is Phosphoribosylformylglycinamidine cyclo-ligase (Clostridium tetani (strain Massachusetts / E88)).